Consider the following 211-residue polypeptide: Histidine biosynthesis bifunctional protein HisIE (211 aa).

The tract at residues M1–I118 is phosphoribosyl-AMP cyclohydrolase. The tract at residues I119–E211 is phosphoribosyl-ATP pyrophosphohydrolase.

The protein in the N-terminal section; belongs to the PRA-CH family. This sequence in the C-terminal section; belongs to the PRA-PH family.

The protein resides in the cytoplasm. It catalyses the reaction 1-(5-phospho-beta-D-ribosyl)-ATP + H2O = 1-(5-phospho-beta-D-ribosyl)-5'-AMP + diphosphate + H(+). The catalysed reaction is 1-(5-phospho-beta-D-ribosyl)-5'-AMP + H2O = 1-(5-phospho-beta-D-ribosyl)-5-[(5-phospho-beta-D-ribosylamino)methylideneamino]imidazole-4-carboxamide. Its pathway is amino-acid biosynthesis; L-histidine biosynthesis; L-histidine from 5-phospho-alpha-D-ribose 1-diphosphate: step 2/9. It participates in amino-acid biosynthesis; L-histidine biosynthesis; L-histidine from 5-phospho-alpha-D-ribose 1-diphosphate: step 3/9. The protein is Histidine biosynthesis bifunctional protein HisIE (hisI) of Halalkalibacterium halodurans (strain ATCC BAA-125 / DSM 18197 / FERM 7344 / JCM 9153 / C-125) (Bacillus halodurans).